Here is a 612-residue protein sequence, read N- to C-terminus: Capsid protein (612 aa).

A disordered region spans residues methionine 1 to alanine 53. The span at arginine 11–asparagine 23 shows a compositional bias: low complexity. Basic residues predominate over residues asparagine 24–leucine 34.

The protein belongs to the tetravirus capsid protein family.

Its subcellular location is the virion. Self-assembles to form an icosahedral capsid with a T=4 symmetry, about 35 nm in diameter, and consisting of 240 copies of the two structural proteins. The polypeptide is Capsid protein (Nudaurelia capensis beta virus (isolate Pine emperor moth/South Africa) (NbetaV)).